Here is a 248-residue protein sequence, read N- to C-terminus: 3-deoxy-manno-octulosonate cytidylyltransferase (248 aa).

Belongs to the KdsB family.

It is found in the cytoplasm. It carries out the reaction 3-deoxy-alpha-D-manno-oct-2-ulosonate + CTP = CMP-3-deoxy-beta-D-manno-octulosonate + diphosphate. It participates in nucleotide-sugar biosynthesis; CMP-3-deoxy-D-manno-octulosonate biosynthesis; CMP-3-deoxy-D-manno-octulosonate from 3-deoxy-D-manno-octulosonate and CTP: step 1/1. The protein operates within bacterial outer membrane biogenesis; lipopolysaccharide biosynthesis. Functionally, activates KDO (a required 8-carbon sugar) for incorporation into bacterial lipopolysaccharide in Gram-negative bacteria. The protein is 3-deoxy-manno-octulosonate cytidylyltransferase of Klebsiella pneumoniae (strain 342).